The following is a 166-amino-acid chain: Large ribosomal subunit protein uL11 (166 aa).

The protein belongs to the universal ribosomal protein uL11 family.

This protein binds directly to 26S ribosomal RNA. The protein is Large ribosomal subunit protein uL11 (RPL12) of Prunus armeniaca (Apricot).